We begin with the raw amino-acid sequence, 262 residues long: Indole-3-glycerol phosphate synthase (262 aa).

The protein belongs to the TrpC family.

The enzyme catalyses 1-(2-carboxyphenylamino)-1-deoxy-D-ribulose 5-phosphate + H(+) = (1S,2R)-1-C-(indol-3-yl)glycerol 3-phosphate + CO2 + H2O. The protein operates within amino-acid biosynthesis; L-tryptophan biosynthesis; L-tryptophan from chorismate: step 4/5. This is Indole-3-glycerol phosphate synthase from Nitratiruptor sp. (strain SB155-2).